Here is a 385-residue protein sequence, read N- to C-terminus: Putative transport protein MT1133 (385 aa).

8 helical membrane-spanning segments follow: residues 7 to 27 (LTQK…GAYF), 32 to 52 (FVLI…FKWF), 66 to 86 (LLSA…LAIV), 159 to 179 (SLAG…ALLV), 218 to 238 (FVIA…AGFH), 241 to 261 (FFIF…GGIV), 263 to 283 (IPFG…FVLL), and 319 to 339 (GITM…ILIV).

The protein belongs to the autoinducer-2 exporter (AI-2E) (TC 2.A.86) family.

The protein resides in the cell membrane. In Mycobacterium tuberculosis (strain CDC 1551 / Oshkosh), this protein is Putative transport protein MT1133.